The primary structure comprises 171 residues: Crossover junction endodeoxyribonuclease RuvC (171 aa).

Catalysis depends on residues Asp-11, Glu-71, and Asp-143. 3 residues coordinate Mg(2+): Asp-11, Glu-71, and Asp-143.

Belongs to the RuvC family. Homodimer which binds Holliday junction (HJ) DNA. The HJ becomes 2-fold symmetrical on binding to RuvC with unstacked arms; it has a different conformation from HJ DNA in complex with RuvA. In the full resolvosome a probable DNA-RuvA(4)-RuvB(12)-RuvC(2) complex forms which resolves the HJ. It depends on Mg(2+) as a cofactor.

The protein localises to the cytoplasm. The enzyme catalyses Endonucleolytic cleavage at a junction such as a reciprocal single-stranded crossover between two homologous DNA duplexes (Holliday junction).. Its function is as follows. The RuvA-RuvB-RuvC complex processes Holliday junction (HJ) DNA during genetic recombination and DNA repair. Endonuclease that resolves HJ intermediates. Cleaves cruciform DNA by making single-stranded nicks across the HJ at symmetrical positions within the homologous arms, yielding a 5'-phosphate and a 3'-hydroxyl group; requires a central core of homology in the junction. The consensus cleavage sequence is 5'-(A/T)TT(C/G)-3'. Cleavage occurs on the 3'-side of the TT dinucleotide at the point of strand exchange. HJ branch migration catalyzed by RuvA-RuvB allows RuvC to scan DNA until it finds its consensus sequence, where it cleaves and resolves the cruciform DNA. The polypeptide is Crossover junction endodeoxyribonuclease RuvC (Chelativorans sp. (strain BNC1)).